The sequence spans 562 residues: Dihydroxy-acid dehydratase 2 (562 aa).

A [2Fe-2S] cluster-binding site is contributed by Cys50. Residue Asp82 coordinates Mg(2+). Cys123 contributes to the [2Fe-2S] cluster binding site. Positions 124, 125, and 447 each coordinate Mg(2+). Position 125 is an N6-carboxylysine (Lys125). The active-site Proton acceptor is the Ser473.

The protein belongs to the IlvD/Edd family. As to quaternary structure, homodimer. [2Fe-2S] cluster serves as cofactor. Mg(2+) is required as a cofactor.

It catalyses the reaction (2R)-2,3-dihydroxy-3-methylbutanoate = 3-methyl-2-oxobutanoate + H2O. The catalysed reaction is (2R,3R)-2,3-dihydroxy-3-methylpentanoate = (S)-3-methyl-2-oxopentanoate + H2O. It participates in amino-acid biosynthesis; L-isoleucine biosynthesis; L-isoleucine from 2-oxobutanoate: step 3/4. Its pathway is amino-acid biosynthesis; L-valine biosynthesis; L-valine from pyruvate: step 3/4. Functions in the biosynthesis of branched-chain amino acids. Catalyzes the dehydration of (2R,3R)-2,3-dihydroxy-3-methylpentanoate (2,3-dihydroxy-3-methylvalerate) into 2-oxo-3-methylpentanoate (2-oxo-3-methylvalerate) and of (2R)-2,3-dihydroxy-3-methylbutanoate (2,3-dihydroxyisovalerate) into 2-oxo-3-methylbutanoate (2-oxoisovalerate), the penultimate precursor to L-isoleucine and L-valine, respectively. The sequence is that of Dihydroxy-acid dehydratase 2 from Bordetella pertussis (strain Tohama I / ATCC BAA-589 / NCTC 13251).